We begin with the raw amino-acid sequence, 281 residues long: Diaminopimelate epimerase (281 aa).

Substrate is bound by residues Asn13, Gln46, and Asn66. Cys75 serves as the catalytic Proton donor. Substrate contacts are provided by residues 76–77, Asn160, Asn193, and 211–212; these read GN and ER. The Proton acceptor role is filled by Cys220. Substrate is bound at residue 221–222; it reads GT.

The protein belongs to the diaminopimelate epimerase family. As to quaternary structure, homodimer.

The protein resides in the cytoplasm. The catalysed reaction is (2S,6S)-2,6-diaminopimelate = meso-2,6-diaminopimelate. It functions in the pathway amino-acid biosynthesis; L-lysine biosynthesis via DAP pathway; DL-2,6-diaminopimelate from LL-2,6-diaminopimelate: step 1/1. In terms of biological role, catalyzes the stereoinversion of LL-2,6-diaminopimelate (L,L-DAP) to meso-diaminopimelate (meso-DAP), a precursor of L-lysine and an essential component of the bacterial peptidoglycan. This Acinetobacter baumannii (strain AB307-0294) protein is Diaminopimelate epimerase.